We begin with the raw amino-acid sequence, 1071 residues long: SLIT-ROBO Rho GTPase-activating protein 2 (1071 aa).

The F-BAR domain maps to 22-325 (KEIRAQLTEQ…AVENLDATSD (304 aa)). A compositionally biased stretch (basic and acidic residues) spans 181–203 (LKEAEKQEEKQIGKSVKQEDRQT). Residues 181–211 (LKEAEKQEEKQIGKSVKQEDRQTPRSPDSTA) form a disordered region. Ser206 carries the phosphoserine modification. A coiled-coil region spans residues 362-401 (VQSELVQRCQQLQSRLSTLKIENEEVKKTMEATLQTIQDI). Phosphoserine occurs at positions 427, 500, 691, and 695. A Rho-GAP domain is found at 489-679 (ARRSSTVRKQ…TIIIQHENIF (191 aa)). The segment at 698-726 (DYCDSPHGETTSVEDSTQDVTAEHHTSDD) is disordered. Over residues 705 to 717 (GETTSVEDSTQDV) the composition is skewed to polar residues. Position 724 is a phosphoserine (Ser724). The 60-residue stretch at 728–787 (CEPIEAIAKFDYVGRTARELSFKKGASLLLYQRASDDWWEGRHNGIDGLIPHQYIVVQDT) folds into the SH3 domain. Ser795 is subject to Phosphoserine. Residues 837–936 (QRKRPESGSI…RSKSFNNHRP (100 aa)) are disordered. Over residues 855 to 866 (HGLSSSLTDSSS) the composition is skewed to low complexity. Polar residues-rich tracts occupy residues 874–885 (RPSSQPIMSQSL) and 897–907 (GHGSLNSISRH). Ser916 carries the phosphoserine modification. Residues 919 to 933 (IRKTATAGRSKSFNN) show a composition bias toward polar residues. At Arg927 the chain carries Symmetric dimethylarginine; by PRMT5. Ser930 carries the phosphoserine modification. The stretch at 940 to 967 (EVIAQDIEATMNSALNELRELERQSSVK) forms a coiled coil. Residues 983 to 1012 (SPVVAPTSEPSSPLHTQLLKDPEPAFQRSA) form a disordered region. Phosphoserine is present on residues Ser990, Ser994, Ser1013, and Ser1027. The segment at 1029 to 1071 (KMAAPVKPPATRPKPTVFPKTNATSPGVNSSTSPQSTDKSCTV) is disordered. Positions 1047-1071 (PKTNATSPGVNSSTSPQSTDKSCTV) are enriched in polar residues.

In terms of assembly, homodimer. Heterodimer; forms a heterodimer with SRGAP2C, altering SRGAP2 function. Forms a heterooligomer with SRGAP1 and SRGAP3 through its F-BAR domain. Interacts (via SH3 domain) with GPHN. Interacts (via SH3 domain) with FMNL1 (activated by RAC1); regulates the actin filament severing activity of FMNL1 and actin dynamics. Interacts (via SH3 domain) with FMNL3. Interacts with RAC1; specifically stimulates RAC1 GTPase activity. Interacts (via F-BAR domain) with HOMER1. Interacts with ROBO1 and ROBO2. Interacts with FASLG. Interacts with PRMT5. In terms of processing, methylation at Arg-927 is required for the stimulation of cell migration, dimerization and localization at the plasma membrane protrusions.

It localises to the cell membrane. Its subcellular location is the cell projection. The protein localises to the dendritic spine. It is found in the postsynaptic density. The protein resides in the postsynaptic cell membrane. It localises to the lamellipodium. Its subcellular location is the cytoplasmic vesicle. The protein localises to the phagosome. It is found in the nucleus. The protein resides in the cytoplasm. It localises to the cytosol. Activity is strongly inhibited by SRGAP2C, which heterodimerize with SRGAP2/SRGAP2A, thereby reducing SRGAP2/SRGAP2A levels through proteasome-dependent degradation. In terms of biological role, postsynaptic RAC1 GTPase activating protein (GAP) that plays a key role in neuronal morphogenesis and migration mainly during development of the cerebral cortex. Regulates excitatory and inhibitory synapse maturation and density in cortical pyramidal neurons. SRGAP2/SRGAP2A limits excitatory and inhibitory synapse density through its RAC1-specific GTPase activating activity, while it promotes maturation of both excitatory and inhibitory synapses through its ability to bind to the postsynaptic scaffolding protein HOMER1 at excitatory synapses, and the postsynaptic protein GPHN at inhibitory synapses. Mechanistically, acts by binding and deforming membranes, thereby regulating actin dynamics to regulate cell migration and differentiation. Promotes cell repulsion and contact inhibition of locomotion: localizes to protrusions with curved edges and controls the duration of RAC1 activity in contact protrusions. In non-neuronal cells, may also play a role in cell migration by regulating the formation of lamellipodia and filopodia. This chain is SLIT-ROBO Rho GTPase-activating protein 2, found in Homo sapiens (Human).